The chain runs to 884 residues: MNCNEHESTKLNYLNSLEKSRDVKTDISDKPKYFITFPYPYMNGKLHLGHLYSISKADFMSYYKELQGFNVLFPLAFHCTGMPIAALAKKLGEELEGKKTDISTKEIIQNLGFNDVMPFTDPVHWIKTFPKLCISSLKTFGANIDWRRSFVTTDINKYYDSFVRWQFFNLKELGYLSFGKRHSIYCPLDKQMCLDHDRRKGENIKPVRQIMFKFHLHDKILLVRQNSIGKPYKLVCGKSLEVVSFKYNNTSFLAEKIIFDNLKYQINNVKYKESLVLSMDLKDGLTYDGTNIEVEVIEKNILVVKTDTKSDVELYEKEIKALNEIEETLFTLSTSSEGIVESVAKLSVENTKDLLVQTKHFISVYIPEKEVISRSGGICVVSLLDQWYIDYSNEKWKSKVKKCLDNLECGPDTRSMLYAGIDWVNKWGFSRSFGLGTKIPWDTQYLIDSLSDSTIYMAFYTVKHLLFEDLEGKLEIFPSNKLSNDVWDYIFAGKDLVPELYGYLDLLEKCRNNFQYFYPVDLRVSGKDLIKNHLLFFMFNHVALFDEKYWPKRIFTNGHLMLNKEKMSKSTGNFLSVDDALLKYGKSATRMCLAVCGDTNDDANFVEDNANLFILKIYTFVKEIQKLNELVRKKSENETIASYSNADVLLLETVSVNVTEALNAYNSMKYSDVVKFSFFEMVNLINLYNNINGTNILLKNLVYKSATQLLYPIMPDLCRTLIEKYFDSEFNLPEPKLKTNKMISAFEYISELIKKIAASKQAKNNSCVKIAVGKNYSEWKKEIFELIDKIDCPRNNEIKKNKVFIASLLDSVKPILQKSKINITKGNNFVMDYLVNPDKFVMKFNEYEIINEFKFYIENMSNKKAILEEHCDAEPLNPIITFSK.

The 'HIGH' region signature appears at 40 to 50 (PYMNGKLHLGH). The 'KMSKS' region motif lies at 566-570 (KMSKS). ATP is bound at residue lysine 569.

The protein belongs to the class-I aminoacyl-tRNA synthetase family.

The protein resides in the cytoplasm. It carries out the reaction tRNA(Leu) + L-leucine + ATP = L-leucyl-tRNA(Leu) + AMP + diphosphate. This is Probable leucine--tRNA ligase, cytoplasmic from Vairimorpha ceranae (strain BRL01) (Microsporidian parasite).